We begin with the raw amino-acid sequence, 616 residues long: uncharacterized protein (616 aa).

Disordered regions lie at residues 166 to 243 (SRTY…TPEL) and 272 to 298 (DHEE…IEEI). Positions 184 to 200 (RVDESRPSENSSRHDYV) are enriched in basic and acidic residues. The span at 221 to 237 (TRTSNVTQTQPPTNQVF) shows a compositional bias: polar residues. Residues 272 to 287 (DHEEEEGQDDDEETEI) are compositionally biased toward acidic residues. Positions 343–417 (ILIKLKFMND…VHCHISTTPY (75 aa)) constitute a Ubiquitin-like domain.

This is an uncharacterized protein from Caenorhabditis elegans.